Here is a 546-residue protein sequence, read N- to C-terminus: Medium-chain-fatty-acid--CoA ligase (546 aa).

Mg(2+) is bound at residue T185. Positions 235 and 329 each coordinate ATP. E330 is a Mg(2+) binding site. Residues D417, K434, K438, and W443 each contribute to the ATP site.

Belongs to the ATP-dependent AMP-binding enzyme family.

The protein localises to the cytoplasm. It carries out the reaction a medium-chain fatty acid + ATP + CoA = a medium-chain fatty acyl-CoA + AMP + diphosphate. The protein operates within lipid metabolism; fatty acid metabolism. The chain is Medium-chain-fatty-acid--CoA ligase from Ectopseudomonas oleovorans (Pseudomonas oleovorans).